Reading from the N-terminus, the 386-residue chain is Phosphoglycerate kinase (386 aa).

Substrate-binding positions include 21 to 23 (DLN), R36, 59 to 62 (HLGR), R112, and R145. ATP contacts are provided by residues K196, E313, and 339-342 (GGDT).

It belongs to the phosphoglycerate kinase family. As to quaternary structure, monomer.

Its subcellular location is the cytoplasm. The enzyme catalyses (2R)-3-phosphoglycerate + ATP = (2R)-3-phospho-glyceroyl phosphate + ADP. The protein operates within carbohydrate degradation; glycolysis; pyruvate from D-glyceraldehyde 3-phosphate: step 2/5. In Haemophilus influenzae (strain PittEE), this protein is Phosphoglycerate kinase.